The following is a 208-amino-acid chain: MSTVVVKGNVNGGVQQPRRRRRQSLRRRANRVQPVVMVTASGQPRRRRRRRGGNRRSRRTGVPRGRGSSETFVFTKDNLMGNSQGSFTFGPSLSDCPAFKDGILKAYHEYKITSILLQFVSEASSTSSGSIAYELDPHCKVSSLQSYVNKFQITKGGAKTYQARMINGVEWHDSSEDQCRILWKGNGKSSDTAGSFRVTIRVALQNPK.

Positions 1-16 are enriched in low complexity; it reads MSTVVVKGNVNGGVQQ. The interval 1-69 is disordered; the sequence is MSTVVVKGNV…TGVPRGRGSS (69 aa). Basic residues-rich tracts occupy residues 17–30 and 44–61; these read PRRR…RRAN and PRRR…RRTG.

It belongs to the luteoviruses capsid protein family.

It localises to the virion. Major capsid protein that self-assembles to form an icosahedral capsid with a T=3 symmetry, about 23 nm in diameter, and consisting of 180 capsid proteins monomers. Most of the 180 monomers are the major capsid protein, but a small percentage contain the minor capsid protein, which has a long C-terminal extension. The protein is Major capsid protein of Solanum tuberosum (Potato).